The primary structure comprises 493 residues: Probable cytosol aminopeptidase (493 aa).

Lysine 262 and aspartate 267 together coordinate Mn(2+). Residue lysine 274 is part of the active site. Mn(2+) contacts are provided by aspartate 285, aspartate 344, and glutamate 346. Arginine 348 is a catalytic residue.

It belongs to the peptidase M17 family. Requires Mn(2+) as cofactor.

Its subcellular location is the cytoplasm. The catalysed reaction is Release of an N-terminal amino acid, Xaa-|-Yaa-, in which Xaa is preferably Leu, but may be other amino acids including Pro although not Arg or Lys, and Yaa may be Pro. Amino acid amides and methyl esters are also readily hydrolyzed, but rates on arylamides are exceedingly low.. The enzyme catalyses Release of an N-terminal amino acid, preferentially leucine, but not glutamic or aspartic acids.. Functionally, presumably involved in the processing and regular turnover of intracellular proteins. Catalyzes the removal of unsubstituted N-terminal amino acids from various peptides. This is Probable cytosol aminopeptidase from Xanthomonas campestris pv. campestris (strain 8004).